Consider the following 66-residue polypeptide: Beta-toxin Cb2 (66 aa).

The region spanning 1–66 (KEGYLVDLHT…VWPLPNKRCK (66 aa)) is the LCN-type CS-alpha/beta domain. 4 disulfide bridges follow: C12/C65, C16/C41, C25/C46, and C29/C48.

The protein belongs to the long (4 C-C) scorpion toxin superfamily. Sodium channel inhibitor family. Beta subfamily. Expressed by the venom gland.

The protein localises to the secreted. Its function is as follows. Beta toxins bind voltage-independently at site-4 of sodium channels (Nav) and reduces peak current and shifts the voltage of activation toward more negative potentials thereby affecting sodium channel activation and promoting spontaneous and repetitive firing. Has an inhibitory effect on voltage-gated sodium channel hNav1.6/SCN8A, affecting both the activation and inactivation processes. Also reduces the peak current of hNav1.5/SCN5A but does not shift its voltage of activation. This toxin is active against mammals and lethal to mice. This chain is Beta-toxin Cb2, found in Centruroides baergi (Scorpion).